A 399-amino-acid polypeptide reads, in one-letter code: tRNA-specific 2-thiouridylase MnmA (399 aa).

ATP is bound by residues 18–25 (AMSGGVDS) and L44. The Nucleophile role is filled by C112. C112 and C213 are oxidised to a cystine. G136 lines the ATP pocket. Residues 163–165 (RDQ) form an interaction with tRNA region. C213 (cysteine persulfide intermediate) is an active-site residue.

The protein belongs to the MnmA/TRMU family.

It is found in the cytoplasm. It carries out the reaction S-sulfanyl-L-cysteinyl-[protein] + uridine(34) in tRNA + AH2 + ATP = 2-thiouridine(34) in tRNA + L-cysteinyl-[protein] + A + AMP + diphosphate + H(+). In terms of biological role, catalyzes the 2-thiolation of uridine at the wobble position (U34) of tRNA, leading to the formation of s(2)U34. This is tRNA-specific 2-thiouridylase MnmA from Rhizobium rhizogenes (strain K84 / ATCC BAA-868) (Agrobacterium radiobacter).